Consider the following 423-residue polypeptide: Guanine nucleotide-binding protein subunit beta (423 aa).

WD repeat units lie at residues Gly-90–Asp-120, Leu-132–Arg-162, Gly-179–Asp-208, Asp-220–Asp-256, Val-268–Asp-298, Asp-348–Asp-377, and Gly-389–Ser-419.

This sequence belongs to the WD repeat G protein beta family. G proteins are composed of 3 units, alpha, beta and gamma. The beta-gamma subunit complex (STE4-STE18 complex) interacts with PLP1 and PLP2. Interacts with SYG1.

Its function is as follows. Implicated in the a- and alpha-factor response pathway. The beta and gamma chains of the putative yeast mating response pathway G protein play a positive role in initiation of the mating response. The beta and gamma chains are required for the GTPase activity, for replacement of GDP by GTP, and for G protein-effector interaction. In Saccharomyces cerevisiae (strain ATCC 204508 / S288c) (Baker's yeast), this protein is Guanine nucleotide-binding protein subunit beta (STE4).